Consider the following 267-residue polypeptide: Mediator of RNA polymerase II transcription subunit 8 (267 aa).

Coiled-coil stretches lie at residues 1 to 26 (MQRE…KNSL) and 116 to 160 (DVEE…EERE). Residues 190 to 267 (GLSNRRPPGQ…KSASMHPYQR (78 aa)) form a disordered region. The segment covering 227–245 (PPNQQQQHMAGVSMSQGSQ) has biased composition (polar residues).

The protein belongs to the Mediator complex subunit 8 family. As to quaternary structure, component of the Mediator complex. May be part of a multisubunit E3 ubiquitin-protein ligase complex.

It localises to the nucleus. It functions in the pathway protein modification; protein ubiquitination. In terms of biological role, component of the Mediator complex, a coactivator involved in the regulated transcription of nearly all RNA polymerase II-dependent genes. Mediator functions as a bridge to convey information from gene-specific regulatory proteins to the basal RNA polymerase II transcription machinery. Mediator is recruited to promoters by direct interactions with regulatory proteins and serves as a scaffold for the assembly of a functional preinitiation complex with RNA polymerase II and the general transcription factors. May play a role as a target recruitment subunit in E3 ubiquitin-protein ligase complexes and thus in ubiquitination and subsequent proteasomal degradation of target proteins. The polypeptide is Mediator of RNA polymerase II transcription subunit 8 (med8) (Xenopus tropicalis (Western clawed frog)).